The following is a 154-amino-acid chain: SsrA-binding protein (154 aa).

It belongs to the SmpB family.

It localises to the cytoplasm. Required for rescue of stalled ribosomes mediated by trans-translation. Binds to transfer-messenger RNA (tmRNA), required for stable association of tmRNA with ribosomes. tmRNA and SmpB together mimic tRNA shape, replacing the anticodon stem-loop with SmpB. tmRNA is encoded by the ssrA gene; the 2 termini fold to resemble tRNA(Ala) and it encodes a 'tag peptide', a short internal open reading frame. During trans-translation Ala-aminoacylated tmRNA acts like a tRNA, entering the A-site of stalled ribosomes, displacing the stalled mRNA. The ribosome then switches to translate the ORF on the tmRNA; the nascent peptide is terminated with the 'tag peptide' encoded by the tmRNA and targeted for degradation. The ribosome is freed to recommence translation, which seems to be the essential function of trans-translation. The polypeptide is SsrA-binding protein (Enterococcus faecalis (strain ATCC 700802 / V583)).